The sequence spans 86 residues: RNA-binding protein Hfq (86 aa).

The region spanning 9–68 (DPYLNTLRKEKVPVSIYLVNGIKLQGSIESFDQFVVLLKNTVSQMVYKHAISTVVPARPV) is the Sm domain. A disordered region spans residues 67–86 (PVRLPSPTDGEHGDSEPGNA). Residues 75–86 (DGEHGDSEPGNA) are compositionally biased toward basic and acidic residues.

This sequence belongs to the Hfq family. In terms of assembly, homohexamer.

In terms of biological role, RNA chaperone that binds small regulatory RNA (sRNAs) and mRNAs to facilitate mRNA translational regulation in response to envelope stress, environmental stress and changes in metabolite concentrations. Also binds with high specificity to tRNAs. The sequence is that of RNA-binding protein Hfq from Pseudomonas putida (strain GB-1).